The primary structure comprises 330 residues: GMP reductase (330 aa).

The active-site Thioimidate intermediate is the cysteine 180. NADP(+) is bound at residue leucine 209–valine 232.

Belongs to the IMPDH/GMPR family. GuaC type 2 subfamily.

The enzyme catalyses IMP + NH4(+) + NADP(+) = GMP + NADPH + 2 H(+). Functionally, catalyzes the irreversible NADPH-dependent deamination of GMP to IMP. It functions in the conversion of nucleobase, nucleoside and nucleotide derivatives of G to A nucleotides, and in maintaining the intracellular balance of A and G nucleotides. This is GMP reductase from Lactobacillus acidophilus (strain ATCC 700396 / NCK56 / N2 / NCFM).